The chain runs to 142 residues: Hemoglobin F-I (142 aa).

One can recognise a Globin domain in the interval G2–K142. A heme b-binding site is contributed by H95.

This sequence belongs to the globin family. Homotetramer.

Functionally, hemoglobin F-I appears to function in storage, rather than transport of oxygen. This chain is Hemoglobin F-I, found in Urechis caupo (Innkeeper worm).